A 1639-amino-acid polypeptide reads, in one-letter code: Peroxide stress-activated histidine kinase mak1 (1639 aa).

A compositionally biased stretch (polar residues) spans 38–49; sequence SFTNSQNSSVGS. Positions 38–76 are disordered; the sequence is SFTNSQNSSVGSVHSPILESPTSLNRQHRNSFSFNNVSS. The segment covering 67–76 has biased composition (low complexity); that stretch reads NSFSFNNVSS. The PAS 1 domain maps to 716–786; sequence PFPLLKVIID…NDWKSSLFSG (71 aa). Residues 789–841 form the PAC 1 domain; it reads FYHEIRLQRFDNVYRYFICRAVPLRDCTGSVLHFFGTMTDVHDQKLAERELQK. The 73-residue stretch at 848–920 folds into the PAS 2 domain; sequence NENSYRSLAE…ESLEGTFNNQ (73 aa). The PAC 2 domain occupies 929 to 982; it reads FAAEIRFRSTDGHYRWHLVKSVCVNNSADTSTNLWLGTCTDIHDHKMLEEKLQE. The region spanning 1000-1223 is the Histidine kinase domain; sequence NMSHEIRTPL…RFMWTATFTM (224 aa). H1003 is modified (phosphohistidine; by autocatalysis). The region spanning 1507–1629 is the Response regulatory domain; that stretch reads SVLLAEDNII…HLSLIISGIL (123 aa). At D1559 the chain carries 4-aspartylphosphate.

The protein resides in the cytoplasm. It catalyses the reaction ATP + protein L-histidine = ADP + protein N-phospho-L-histidine.. Its function is as follows. Involved in the control of the SAPK-dependent transcriptional response to peroxide stress. Also has a role in G2/M regulation. This chain is Peroxide stress-activated histidine kinase mak1 (mak1), found in Schizosaccharomyces pombe (strain 972 / ATCC 24843) (Fission yeast).